A 467-amino-acid polypeptide reads, in one-letter code: Flagellum-specific ATP synthase (467 aa).

180–187 (AGSGVGKS) serves as a coordination point for ATP.

It belongs to the ATPase alpha/beta chains family.

The protein localises to the cytoplasm. The catalysed reaction is ATP + H2O + 4 H(+)(in) = ADP + phosphate + 5 H(+)(out). In terms of biological role, probable catalytic subunit of a protein translocase for flagellum-specific export, or a proton translocase involved in local circuits at the flagellum. The protein is Flagellum-specific ATP synthase (fliI) of Rhizobium meliloti (strain 1021) (Ensifer meliloti).